We begin with the raw amino-acid sequence, 100 residues long: Urease subunit gamma (100 aa).

Belongs to the urease gamma subunit family. Heterotrimer of UreA (gamma), UreB (beta) and UreC (alpha) subunits. Three heterotrimers associate to form the active enzyme.

Its subcellular location is the cytoplasm. It carries out the reaction urea + 2 H2O + H(+) = hydrogencarbonate + 2 NH4(+). It functions in the pathway nitrogen metabolism; urea degradation; CO(2) and NH(3) from urea (urease route): step 1/1. The chain is Urease subunit gamma from Marinobacter nauticus (strain ATCC 700491 / DSM 11845 / VT8) (Marinobacter aquaeolei).